A 581-amino-acid polypeptide reads, in one-letter code: Protein alan shepard (581 aa).

Pro residues predominate over residues 1-10 (MHPRYSPAPP). Positions 1–73 (MHPRYSPAPP…AVTAAPPTPR (73 aa)) are disordered. Y5 carries the phosphotyrosine modification. The segment covering 35–54 (ANNSQQLPPQMPRSQNYANG) has biased composition (polar residues). Over residues 55 to 68 (SSSSAAAASAVTAA) the composition is skewed to low complexity. Y128 and Y146 each carry phosphotyrosine. The segment covering 168–226 (PATTTYGQRVPTAASPSNTNSSSSSNTGSQSGTLSTSLSHTTNTNTNMGPNGTAQNQNQ) has biased composition (low complexity). Residues 168–234 (PATTTYGQRV…NQQGGGGEQL (67 aa)) form a disordered region. RRM domains are found at residues 237 to 310 (TNLY…MAKQ) and 316 to 395 (TNLY…FADG). A disordered region spans residues 555–581 (MTDSEQASTAASPDEAYTQYPHQAAPK).

Its function is as follows. Has a role in the perception of gravity. This is Protein alan shepard from Drosophila willistoni (Fruit fly).